We begin with the raw amino-acid sequence, 97 residues long: Co-chaperonin GroES (97 aa).

The protein belongs to the GroES chaperonin family. In terms of assembly, heptamer of 7 subunits arranged in a ring. Interacts with the chaperonin GroEL.

It is found in the cytoplasm. In terms of biological role, together with the chaperonin GroEL, plays an essential role in assisting protein folding. The GroEL-GroES system forms a nano-cage that allows encapsulation of the non-native substrate proteins and provides a physical environment optimized to promote and accelerate protein folding. GroES binds to the apical surface of the GroEL ring, thereby capping the opening of the GroEL channel. The protein is Co-chaperonin GroES of Wigglesworthia glossinidia brevipalpis.